The following is a 293-amino-acid chain: Ribosomal protein L11 methyltransferase (293 aa).

The S-adenosyl-L-methionine site is built by Thr145, Gly166, Asp188, and Asn230.

Belongs to the methyltransferase superfamily. PrmA family.

It localises to the cytoplasm. It catalyses the reaction L-lysyl-[protein] + 3 S-adenosyl-L-methionine = N(6),N(6),N(6)-trimethyl-L-lysyl-[protein] + 3 S-adenosyl-L-homocysteine + 3 H(+). Functionally, methylates ribosomal protein L11. This chain is Ribosomal protein L11 methyltransferase, found in Klebsiella pneumoniae (strain 342).